A 356-amino-acid chain; its full sequence is Holliday junction branch migration complex subunit RuvB (356 aa).

Over residues 1-14 the composition is skewed to polar residues; it reads MAIVSSITNHSSLP. The tract at residues 1 to 20 is disordered; the sequence is MAIVSSITNHSSLPNDKGEE. The interval 13 to 201 is large ATPase domain (RuvB-L); it reads LPNDKGEERL…FGITQRLDFY (189 aa). The ATP site is built by Leu-40, Arg-41, Gly-82, Lys-85, Thr-86, Thr-87, Arg-191, Tyr-201, and Arg-238. Thr-86 lines the Mg(2+) pocket. Positions 202–273 are small ATPAse domain (RuvB-S); it reads NYLDLENIIK…VVNDALDLHR (72 aa). Residues 276 to 356 are head domain (RuvB-H); it reads QRGLDATDRS…LLTSPNNIDK (81 aa). DNA-binding residues include Arg-331 and Arg-336.

It belongs to the RuvB family. Homohexamer. Forms an RuvA(8)-RuvB(12)-Holliday junction (HJ) complex. HJ DNA is sandwiched between 2 RuvA tetramers; dsDNA enters through RuvA and exits via RuvB. An RuvB hexamer assembles on each DNA strand where it exits the tetramer. Each RuvB hexamer is contacted by two RuvA subunits (via domain III) on 2 adjacent RuvB subunits; this complex drives branch migration. In the full resolvosome a probable DNA-RuvA(4)-RuvB(12)-RuvC(2) complex forms which resolves the HJ.

It is found in the cytoplasm. It catalyses the reaction ATP + H2O = ADP + phosphate + H(+). In terms of biological role, the RuvA-RuvB-RuvC complex processes Holliday junction (HJ) DNA during genetic recombination and DNA repair, while the RuvA-RuvB complex plays an important role in the rescue of blocked DNA replication forks via replication fork reversal (RFR). RuvA specifically binds to HJ cruciform DNA, conferring on it an open structure. The RuvB hexamer acts as an ATP-dependent pump, pulling dsDNA into and through the RuvAB complex. RuvB forms 2 homohexamers on either side of HJ DNA bound by 1 or 2 RuvA tetramers; 4 subunits per hexamer contact DNA at a time. Coordinated motions by a converter formed by DNA-disengaged RuvB subunits stimulates ATP hydrolysis and nucleotide exchange. Immobilization of the converter enables RuvB to convert the ATP-contained energy into a lever motion, pulling 2 nucleotides of DNA out of the RuvA tetramer per ATP hydrolyzed, thus driving DNA branch migration. The RuvB motors rotate together with the DNA substrate, which together with the progressing nucleotide cycle form the mechanistic basis for DNA recombination by continuous HJ branch migration. Branch migration allows RuvC to scan DNA until it finds its consensus sequence, where it cleaves and resolves cruciform DNA. The protein is Holliday junction branch migration complex subunit RuvB of Prochlorococcus marinus (strain NATL2A).